Consider the following 152-residue polypeptide: Transcriptional regulator MraZ (152 aa).

SpoVT-AbrB domains are found at residues Ala-5–Glu-52 and Ala-81–Thr-124.

It belongs to the MraZ family. As to quaternary structure, forms oligomers.

Its subcellular location is the cytoplasm. It is found in the nucleoid. Its function is as follows. Negatively regulates its own expression and that of the subsequent genes in the proximal part of the division and cell wall (dcw) gene cluster. Acts by binding directly to DNA. May also regulate the expression of genes outside the dcw cluster. This is Transcriptional regulator MraZ from Klebsiella pneumoniae (strain 342).